The following is a 505-amino-acid chain: Catalase (505 aa).

The disordered stretch occupies residues 1 to 25 (MSQQDKKLTGVFGHPVSDRENSMTA). Active-site residues include His-56 and Asn-129. Tyr-339 contacts heme.

The protein belongs to the catalase family. In terms of assembly, homodimer. Heme serves as cofactor.

The enzyme catalyses 2 H2O2 = O2 + 2 H2O. In terms of biological role, decomposes hydrogen peroxide into water and oxygen; serves to protect cells from the toxic effects of hydrogen peroxide. In Staphylococcus aureus (strain MSSA476), this protein is Catalase (katA).